We begin with the raw amino-acid sequence, 910 residues long: Protein translocase subunit SecA (910 aa).

Residues Gln-87, Gly-105–Thr-109, and Asp-508 each bind ATP. Positions Arg-558 to Leu-568 are enriched in basic and acidic residues. Disordered regions lie at residues Arg-558 to Ser-580 and Ala-873 to Ser-910. Positions 894, 896, 905, and 906 each coordinate Zn(2+). Positions Lys-900–Ser-910 are enriched in basic residues.

It belongs to the SecA family. As to quaternary structure, monomer and homodimer. Part of the essential Sec protein translocation apparatus which comprises SecA, SecYEG and auxiliary proteins SecDF-YajC and YidC. The cofactor is Zn(2+).

The protein resides in the cell inner membrane. Its subcellular location is the cytoplasm. The enzyme catalyses ATP + H2O + cellular proteinSide 1 = ADP + phosphate + cellular proteinSide 2.. Its function is as follows. Part of the Sec protein translocase complex. Interacts with the SecYEG preprotein conducting channel. Has a central role in coupling the hydrolysis of ATP to the transfer of proteins into and across the cell membrane, serving both as a receptor for the preprotein-SecB complex and as an ATP-driven molecular motor driving the stepwise translocation of polypeptide chains across the membrane. This is Protein translocase subunit SecA from Stenotrophomonas maltophilia (strain R551-3).